Consider the following 275-residue polypeptide: Large ribosomal subunit protein uL2 (275 aa).

The tract at residues 227 to 261 (PVDHPHGGGEAKSGQGNPHPVTPWGVPTKGYKTRK) is disordered.

The protein belongs to the universal ribosomal protein uL2 family. Part of the 50S ribosomal subunit. Forms a bridge to the 30S subunit in the 70S ribosome.

In terms of biological role, one of the primary rRNA binding proteins. Required for association of the 30S and 50S subunits to form the 70S ribosome, for tRNA binding and peptide bond formation. It has been suggested to have peptidyltransferase activity; this is somewhat controversial. Makes several contacts with the 16S rRNA in the 70S ribosome. The polypeptide is Large ribosomal subunit protein uL2 (Xylella fastidiosa (strain M23)).